The chain runs to 262 residues: MKTPFGKSPGQRSRADAGHAGVSASMMKKRTSHKKHRNNVGPSKPISQPRRNIVGCRIQHGWKEGSGPVTQWKGTVLDQVPVNPSLYLIKYDGFDCVYGLELHKDERVSALEVLPDRVASSRISDAHLADTMIGKAVEHMFETEDGSKDEWRGMVLARAPIMNTWFYITYEKDPVLYMYQLLDDYKEGDLRIMPDSNDSPPAEREPGEVVDSLVGKQVEYAKEDGSKRTGMVIHQVEAKPSVYFIKFDDDFHIYVYDLVKTS.

A disordered region spans residues 1 to 50; the sequence is MKTPFGKSPGQRSRADAGHAGVSASMMKKRTSHKKHRNNVGPSKPISQPR. Over residues 27–38 the composition is skewed to basic residues; it reads MKKRTSHKKHRN.

The protein belongs to the SPIN/STSY family. Expressed in several tissues including testis.

The protein localises to the nucleus. Functionally, may play a role in mitosis. In Gallus gallus (Chicken), this protein is Spindlin-Z (SPINZ).